Consider the following 154-residue polypeptide: Myoglobin (154 aa).

A Globin domain is found at 2–148 (GLSDGEWQLV…FRNDMAAQYK (147 aa)). The residue at position 4 (serine 4) is a Phosphoserine. Nitrite is bound at residue histidine 65. Histidine 65 contributes to the O2 binding site. Threonine 68 is subject to Phosphothreonine. Histidine 94 lines the heme b pocket.

In terms of assembly, monomer.

It localises to the cytoplasm. It is found in the sarcoplasm. It catalyses the reaction Fe(III)-heme b-[protein] + nitric oxide + H2O = Fe(II)-heme b-[protein] + nitrite + 2 H(+). The catalysed reaction is H2O2 + AH2 = A + 2 H2O. Its function is as follows. Monomeric heme protein which primary function is to store oxygen and facilitate its diffusion within muscle tissues. Reversibly binds oxygen through a pentacoordinated heme iron and enables its timely and efficient release as needed during periods of heightened demand. Depending on the oxidative conditions of tissues and cells, and in addition to its ability to bind oxygen, it also has a nitrite reductase activity whereby it regulates the production of bioactive nitric oxide. Under stress conditions, like hypoxia and anoxia, it also protects cells against reactive oxygen species thanks to its pseudoperoxidase activity. The sequence is that of Myoglobin from Rangifer tarandus (Reindeer).